The following is a 160-amino-acid chain: UPF0225 protein PP_1119 (160 aa).

It belongs to the UPF0225 family.

The sequence is that of UPF0225 protein PP_1119 from Pseudomonas putida (strain ATCC 47054 / DSM 6125 / CFBP 8728 / NCIMB 11950 / KT2440).